The following is a 401-amino-acid chain: Argininosuccinate synthase (401 aa).

9-17 is an ATP binding site; that stretch reads AYSGGLDTS. Residue tyrosine 86 participates in L-citrulline binding. Glycine 116 contacts ATP. 3 residues coordinate L-aspartate: threonine 118, asparagine 122, and aspartate 123. L-citrulline is bound at residue asparagine 122. Residues arginine 126, serine 174, serine 183, glutamate 259, and tyrosine 271 each coordinate L-citrulline.

It belongs to the argininosuccinate synthase family. Type 1 subfamily. As to quaternary structure, homotetramer.

Its subcellular location is the cytoplasm. The enzyme catalyses L-citrulline + L-aspartate + ATP = 2-(N(omega)-L-arginino)succinate + AMP + diphosphate + H(+). It functions in the pathway amino-acid biosynthesis; L-arginine biosynthesis; L-arginine from L-ornithine and carbamoyl phosphate: step 2/3. The sequence is that of Argininosuccinate synthase from Bacillus cytotoxicus (strain DSM 22905 / CIP 110041 / 391-98 / NVH 391-98).